The sequence spans 154 residues: Large ribosomal subunit protein uL11 (154 aa).

Belongs to the universal ribosomal protein uL11 family. In terms of assembly, part of the ribosomal stalk of the 50S ribosomal subunit. Interacts with L10 and the large rRNA to form the base of the stalk. L10 forms an elongated spine to which L12 dimers bind in a sequential fashion forming a multimeric L10(L12)X complex. Post-translationally, one or more lysine residues are methylated.

Forms part of the ribosomal stalk which helps the ribosome interact with GTP-bound translation factors. This Leuconostoc mesenteroides subsp. mesenteroides (strain ATCC 8293 / DSM 20343 / BCRC 11652 / CCM 1803 / JCM 6124 / NCDO 523 / NBRC 100496 / NCIMB 8023 / NCTC 12954 / NRRL B-1118 / 37Y) protein is Large ribosomal subunit protein uL11.